A 382-amino-acid polypeptide reads, in one-letter code: Sulfate adenylyltransferase (382 aa).

Belongs to the sulfate adenylyltransferase family.

The catalysed reaction is sulfate + ATP + H(+) = adenosine 5'-phosphosulfate + diphosphate. It functions in the pathway sulfur metabolism; hydrogen sulfide biosynthesis; sulfite from sulfate: step 1/3. The polypeptide is Sulfate adenylyltransferase (Ignicoccus hospitalis (strain KIN4/I / DSM 18386 / JCM 14125)).